The chain runs to 269 residues: Tryptophan synthase alpha chain (269 aa).

Residues glutamate 49 and aspartate 60 each act as proton acceptor in the active site.

This sequence belongs to the TrpA family. As to quaternary structure, tetramer of two alpha and two beta chains.

The catalysed reaction is (1S,2R)-1-C-(indol-3-yl)glycerol 3-phosphate + L-serine = D-glyceraldehyde 3-phosphate + L-tryptophan + H2O. Its pathway is amino-acid biosynthesis; L-tryptophan biosynthesis; L-tryptophan from chorismate: step 5/5. In terms of biological role, the alpha subunit is responsible for the aldol cleavage of indoleglycerol phosphate to indole and glyceraldehyde 3-phosphate. This Salmonella arizonae (strain ATCC BAA-731 / CDC346-86 / RSK2980) protein is Tryptophan synthase alpha chain.